Reading from the N-terminus, the 953-residue chain is Valine--tRNA ligase (953 aa).

Residues 42–52 carry the 'HIGH' region motif; it reads PNVTGSLHMGH. A 'KMSKS' region motif is present at residues 554 to 558; sequence KMSKS. Lysine 557 is a binding site for ATP. Residues 884–953 are a coiled coil; it reads LIDKDAELAR…EAQKETIAAL (70 aa).

Belongs to the class-I aminoacyl-tRNA synthetase family. ValS type 1 subfamily. In terms of assembly, monomer.

It localises to the cytoplasm. The catalysed reaction is tRNA(Val) + L-valine + ATP = L-valyl-tRNA(Val) + AMP + diphosphate. Functionally, catalyzes the attachment of valine to tRNA(Val). As ValRS can inadvertently accommodate and process structurally similar amino acids such as threonine, to avoid such errors, it has a 'posttransfer' editing activity that hydrolyzes mischarged Thr-tRNA(Val) in a tRNA-dependent manner. The chain is Valine--tRNA ligase from Photobacterium profundum (strain SS9).